Reading from the N-terminus, the 64-residue chain is Large ribosomal subunit protein eL37 (64 aa).

Residues Cys20, Cys23, Cys35, and Cys38 each coordinate Zn(2+). The segment at Cys20–Cys38 adopts a C4-type zinc-finger fold.

This sequence belongs to the eukaryotic ribosomal protein eL37 family. Requires Zn(2+) as cofactor.

Its function is as follows. Binds to the 23S rRNA. In Methanococcus maripaludis (strain DSM 14266 / JCM 13030 / NBRC 101832 / S2 / LL), this protein is Large ribosomal subunit protein eL37.